A 376-amino-acid chain; its full sequence is cAMP-dependent protein kinase type I regulatory subunit (376 aa).

The dimerization and phosphorylation stretch occupies residues 1–131 (MSYMMAKTLE…ALSKAIAKNV (131 aa)). The segment at 72–93 (PDDCEDLSPMPQTAAPPVRRRG) is disordered. Residues 91–95 (RRGGI) carry the Pseudophosphorylation motif motif. Ser96 is subject to Phosphoserine. 3',5'-cyclic AMP-binding positions include 132–247 (LFAH…FLSR), Glu197, Arg206, 250–371 (ILES…YNSF), Glu321, and Arg330.

Belongs to the cAMP-dependent kinase regulatory chain family. As to quaternary structure, tetramer, composed of 2 regulatory (R) and 2 catalytic (C) subunits. In the presence of cAMP it dissociates into 2 active monomeric C subunits and an R dimer. Post-translationally, the pseudophosphorylation site binds to the substrate-binding region of the catalytic chain but is not phosphorylated. The physiological significance of phosphorylations by other kinases is unclear.

In Drosophila melanogaster (Fruit fly), this protein is cAMP-dependent protein kinase type I regulatory subunit (Pka-R1).